Here is a 381-residue protein sequence, read N- to C-terminus: Cytochrome b (381 aa).

Helical transmembrane passes span 34-54 (FGSL…FLAM), 78-99 (WLMR…YLHI), 114-134 (WNIG…GYVL), and 179-199 (FFAF…IHIL). Residues His84 and His98 each contribute to the heme b site. Heme b contacts are provided by His183 and His197. His202 is an a ubiquinone binding site. A run of 4 helical transmembrane segments spans residues 227 to 247 (YKDL…ALFM), 289 to 309 (LGGV…PLLH), 321 to 341 (LTQI…WIGG), and 348 to 368 (FIMV…FVIP).

Belongs to the cytochrome b family. In terms of assembly, the cytochrome bc1 complex contains 3 respiratory subunits (MT-CYB, CYC1 and UQCRFS1), 2 core proteins (UQCRC1 and UQCRC2) and probably 6 low-molecular weight proteins. Requires heme b as cofactor.

Its subcellular location is the mitochondrion inner membrane. Its function is as follows. Component of the ubiquinol-cytochrome c reductase complex (complex III or cytochrome b-c1 complex) that is part of the mitochondrial respiratory chain. The b-c1 complex mediates electron transfer from ubiquinol to cytochrome c. Contributes to the generation of a proton gradient across the mitochondrial membrane that is then used for ATP synthesis. This Scyliorhinus canicula (Small-spotted catshark) protein is Cytochrome b (mt-cyb).